A 407-amino-acid polypeptide reads, in one-letter code: uncharacterized protein (407 aa).

The stretch at 10 to 37 (DKLEQLANDVVTELTDMENKYKDLHVEL) forms a coiled coil.

This is an uncharacterized protein from Bacillus subtilis (strain 168).